Reading from the N-terminus, the 89-residue chain is Pigment dispersing factor homolog pdf-2 (89 aa).

The signal sequence occupies residues 1–27; that stretch reads MSSRISVSLLLLAVVATMFFTANVVDA.

Functionally, probable ligand of isoforms a and b of the calcitonin receptor-like protein, pdfr-1, a G-protein coupled receptor. May not signal through isoform c of pdfr-1. Involved in locomotion; may play a role in circadian rhythms of locomotor activity. Modulator of egg-laying. The polypeptide is Pigment dispersing factor homolog pdf-2 (Caenorhabditis elegans).